Here is a 342-residue protein sequence, read N- to C-terminus: Protein-ribulosamine 3-kinase, chloroplastic (342 aa).

A chloroplast-targeting transit peptide spans 1-46 (MANVALLSAASPSTSSAAPRLRHVARRRPSRRSACPRSAASRLSIM). 141 to 143 (EFI) is an ATP binding site. The Proton acceptor role is filled by Asp-246.

Belongs to the fructosamine kinase family.

It localises to the plastid. It is found in the chloroplast. It carries out the reaction N(6)-D-ribulosyl-L-lysyl-[protein] + ATP = N(6)-(3-O-phospho-D-ribulosyl)-L-lysyl-[protein] + ADP + H(+). It catalyses the reaction N(6)-(D-erythrulosyl)-L-lysyl-[protein] + ATP = N(6)-(3-O-phospho-D-erythrulosyl)-L-lysyl-[protein] + ADP + H(+). Its function is as follows. Initiates a process leading to the deglycation of proteins. Phosphorylates low-molecular-mass and protein-bound erythrulosamines and ribulosamines, but not fructosamines or psicosamines, on the third carbon of the sugar moiety. Protein-bound erythrulosamine 3-phosphates and ribulosamine 3-phosphates are unstable and decompose under physiological conditions. This chain is Protein-ribulosamine 3-kinase, chloroplastic, found in Oryza sativa subsp. japonica (Rice).